An 863-amino-acid chain; its full sequence is Leucine--tRNA ligase (863 aa).

The 'HIGH' region signature appears at 42–52 (PYPSGRLHMGH). The short motif at 618 to 622 (KMSKS) is the 'KMSKS' region element. Residue Lys621 participates in ATP binding.

This sequence belongs to the class-I aminoacyl-tRNA synthetase family.

Its subcellular location is the cytoplasm. The catalysed reaction is tRNA(Leu) + L-leucine + ATP = L-leucyl-tRNA(Leu) + AMP + diphosphate. The polypeptide is Leucine--tRNA ligase (Colwellia psychrerythraea (strain 34H / ATCC BAA-681) (Vibrio psychroerythus)).